Reading from the N-terminus, the 448-residue chain is Maltoporin (448 aa).

A signal peptide spans 1–25; sequence MMITLRKLPLAVAVMAGIFAAQASA.

This sequence belongs to the porin LamB (TC 1.B.3) family. Homotrimer formed of three 18-stranded antiparallel beta-barrels, containing three independent channels.

The protein localises to the cell outer membrane. The catalysed reaction is beta-maltose(in) = beta-maltose(out). In terms of biological role, involved in the transport of maltose and maltodextrins. This Cronobacter sakazakii (strain ATCC BAA-894) (Enterobacter sakazakii) protein is Maltoporin.